Here is a 341-residue protein sequence, read N- to C-terminus: Elongation factor Ts (341 aa).

The segment at Thr-80 to Val-83 is involved in Mg(2+) ion dislocation from EF-Tu.

This sequence belongs to the EF-Ts family.

Its subcellular location is the cytoplasm. Functionally, associates with the EF-Tu.GDP complex and induces the exchange of GDP to GTP. It remains bound to the aminoacyl-tRNA.EF-Tu.GTP complex up to the GTP hydrolysis stage on the ribosome. The sequence is that of Elongation factor Ts from Lactobacillus gasseri (strain ATCC 33323 / DSM 20243 / BCRC 14619 / CIP 102991 / JCM 1131 / KCTC 3163 / NCIMB 11718 / NCTC 13722 / AM63).